The chain runs to 747 residues: Endoglucanase D (747 aa).

The N-terminal stretch at 1–39 is a signal peptide; the sequence is MHSASRTRARTRVRTAVSGLLAATVLAAPLTLVAAPAQA. E208 serves as the catalytic Proton donor. Catalysis depends on E349, which acts as the Nucleophile. The segment at 456–475 is disordered; sequence APTGLRAGTPTASTVPLTWS. Fibronectin type-III domains are found at residues 456–543 and 552–639; these read APTG…TAAG and VPTG…TAPD. The segment covering 465 to 475 has biased composition (polar residues); it reads PTASTVPLTWS. Residues 638-747 enclose the CBM2 domain; the sequence is PDPTTGSCAV…TVGGATCTTR (110 aa).

The protein belongs to the glycosyl hydrolase 5 (cellulase A) family.

The catalysed reaction is Endohydrolysis of (1-&gt;4)-beta-D-glucosidic linkages in cellulose, lichenin and cereal beta-D-glucans.. It participates in glycan metabolism; cellulose degradation. This chain is Endoglucanase D (cenD), found in Cellulomonas fimi.